A 608-amino-acid chain; its full sequence is ATP-citrate synthase beta chain protein 2 (608 aa).

ATP-binding positions include Ile214–Gly234 and Phe265–Ala291. Glu231 lines the Mg(2+) pocket. The active-site Tele-phosphohistidine intermediate is the His273. Leu292–Ser302 serves as a coordination point for CoA.

It belongs to the succinate/malate CoA ligase alpha subunit family. In terms of assembly, heterooctamer of 4 alpha and 4 beta chains. Expressed in trichomes, epidermal leaf cells, anther tapetal cells, stigma and in young vascular bundles of expanding leaves, cotyledons, roots, pedicel of flowers and siliques.

Its subcellular location is the cytoplasm. The protein localises to the cytosol. It carries out the reaction oxaloacetate + acetyl-CoA + ADP + phosphate = citrate + ATP + CoA. Functionally, ATP citrate-lyase is the primary enzyme responsible for the synthesis of cytosolic acetyl-CoA, used for the elongation of fatty acids and biosynthesis of isoprenoids, flavonoids and malonated derivatives. May supply substrate to the cytosolic acetyl-CoA carboxylase, which generates the malonyl-CoA used for the synthesis of a multitude of compounds, including very long chain fatty acids and flavonoids. Required for normal growth and development and elongation of C18 fatty acids to C20 to C24 fatty acids in seeds. n contrast to all known animal ACL enzymes having a homomeric structure, plant ACLs are composed of alpha and beta chains. This chain is ATP-citrate synthase beta chain protein 2, found in Arabidopsis thaliana (Mouse-ear cress).